The following is a 426-amino-acid chain: MSACINGLCRAVTVSLLLLLLSFSFSSACSNGNCQLLDSCSSATDCVSGLYCGDCPAVGRSKPVCTRGQATSPTSIINGLPFNKYTWLMTHNAFSNANAPLLPGVERITFYNQEDTITNQLQNGVRGLMLDMYDFNNDIWLCHSLRGQCFNFTAFQPAINILREVEAFLSQNPTEIVTIIIEDYVHRPKGLSTLFANAGLDKYWFPVSKMPRKGEDWPTVTDMVQENHRLLVFTSVAAKEDEEGVAYQWRYMVENESGDPGVKRGSCPNRKESQPLNSKSSSLFLMNYFPTYPVEKDACKEHSAPLAEMVGTCLKSGGNRMPNFLAVNFYMRSDGGGVFEILDRMNGPVLCGCETLSACQPGAAYGSCKNVTVQTRTPSMDSTAGSNSGGSYSGSVQFSRSLASVAQLNNIVVFCFSLLPLLIFLL.

An N-terminal signal peptide occupies residues 1 to 28 (MSACINGLCRAVTVSLLLLLLSFSFSSA). A PI-PLC X-box domain is found at 76 to 232 (IINGLPFNKY…MVQENHRLLV (157 aa)). 2 N-linked (GlcNAc...) asparagine glycosylation sites follow: Asn151 and Asn255. The tract at residues 258–277 (GDPGVKRGSCPNRKESQPLN) is disordered. Asn370 carries an N-linked (GlcNAc...) asparagine glycan. Ser404 carries the GPI-anchor amidated serine lipid modification. Positions 405-426 (VAQLNNIVVFCFSLLPLLIFLL) are cleaved as a propeptide — removed in mature form.

Its subcellular location is the cell membrane. This is PI-PLC X domain-containing protein At5g67130 from Arabidopsis thaliana (Mouse-ear cress).